Reading from the N-terminus, the 357-residue chain is MARTPTRLLIAASGTGGHLFPALALAERLPDYEIEWLGVPDRLEQSLVPKTYPLHTIPIEGFQTRLGLKTLKILFSQLRAIWQVRSLIKKRQIAAVFTTGGYIAGPTILAARLANIPVILHESNYIPGKVTKVLGRWCDTVALGFQGTASYLPGTRTTWVSTPVREQFLIPQSLDLPIPETAFLIVVAGGSQGAVALNQLVRQSAPQWLEKGIYIVHLTGENDPEADSLRHSNYFSQPFYDNMAGLWQRANLAISRSGASTLTELAITCTPSILIPYPFAAEDHQFYNAQVFAEAQAAYLYRQNELTAQFLSELVLDLWSNPEKLAAMAQQASHLAISDSADLLADLLRRKSQKDSF.

UDP-N-acetyl-alpha-D-glucosamine-binding positions include 15–17 (TGG), Asn-124, Arg-165, Ser-191, and Gln-285.

It belongs to the glycosyltransferase 28 family. MurG subfamily.

It localises to the cell inner membrane. The enzyme catalyses di-trans,octa-cis-undecaprenyl diphospho-N-acetyl-alpha-D-muramoyl-L-alanyl-D-glutamyl-meso-2,6-diaminopimeloyl-D-alanyl-D-alanine + UDP-N-acetyl-alpha-D-glucosamine = di-trans,octa-cis-undecaprenyl diphospho-[N-acetyl-alpha-D-glucosaminyl-(1-&gt;4)]-N-acetyl-alpha-D-muramoyl-L-alanyl-D-glutamyl-meso-2,6-diaminopimeloyl-D-alanyl-D-alanine + UDP + H(+). The protein operates within cell wall biogenesis; peptidoglycan biosynthesis. Cell wall formation. Catalyzes the transfer of a GlcNAc subunit on undecaprenyl-pyrophosphoryl-MurNAc-pentapeptide (lipid intermediate I) to form undecaprenyl-pyrophosphoryl-MurNAc-(pentapeptide)GlcNAc (lipid intermediate II). The chain is UDP-N-acetylglucosamine--N-acetylmuramyl-(pentapeptide) pyrophosphoryl-undecaprenol N-acetylglucosamine transferase from Microcystis aeruginosa (strain NIES-843 / IAM M-2473).